Reading from the N-terminus, the 156-residue chain is Probable cyclic pyranopterin monophosphate synthase (156 aa).

Substrate-binding positions include 74 to 76 (LCH) and 110 to 111 (ME). Aspartate 125 is an active-site residue.

The protein belongs to the MoaC family. Homohexamer; trimer of dimers.

The catalysed reaction is (8S)-3',8-cyclo-7,8-dihydroguanosine 5'-triphosphate = cyclic pyranopterin phosphate + diphosphate. Its pathway is cofactor biosynthesis; molybdopterin biosynthesis. Its function is as follows. Catalyzes the conversion of (8S)-3',8-cyclo-7,8-dihydroguanosine 5'-triphosphate to cyclic pyranopterin monophosphate (cPMP). The polypeptide is Probable cyclic pyranopterin monophosphate synthase (Thermococcus onnurineus (strain NA1)).